The following is a 337-amino-acid chain: Homeobox protein knotted-1-like 4 (337 aa).

2 disordered regions span residues 1 to 56 (MEQQ…SFHE) and 159 to 190 (FTLD…GLPE). A compositionally biased stretch (low complexity) spans 27–38 (PTSTSTSPAVPS). Positions 200–220 (ELKSHLLNKYSGYLSSLWREL) constitute an ELK domain. Residues 221–284 (SKKKKKGKLP…NQRKRHWKPT (64 aa)) constitute a DNA-binding region (homeobox; TALE-type).

Belongs to the TALE/KNOX homeobox family.

The protein localises to the nucleus. This is Homeobox protein knotted-1-like 4 (OSH10) from Oryza sativa subsp. japonica (Rice).